The following is a 414-amino-acid chain: Serine hydroxymethyltransferase (414 aa).

Residues Leu-121 and 125-127 each bind (6S)-5,6,7,8-tetrahydrofolate; that span reads GHL. Lys-230 is subject to N6-(pyridoxal phosphate)lysine.

The protein belongs to the SHMT family. As to quaternary structure, homodimer. Pyridoxal 5'-phosphate serves as cofactor.

Its subcellular location is the cytoplasm. The catalysed reaction is (6R)-5,10-methylene-5,6,7,8-tetrahydrofolate + glycine + H2O = (6S)-5,6,7,8-tetrahydrofolate + L-serine. Its pathway is one-carbon metabolism; tetrahydrofolate interconversion. The protein operates within amino-acid biosynthesis; glycine biosynthesis; glycine from L-serine: step 1/1. In terms of biological role, catalyzes the reversible interconversion of serine and glycine with tetrahydrofolate (THF) serving as the one-carbon carrier. This reaction serves as the major source of one-carbon groups required for the biosynthesis of purines, thymidylate, methionine, and other important biomolecules. Also exhibits THF-independent aldolase activity toward beta-hydroxyamino acids, producing glycine and aldehydes, via a retro-aldol mechanism. In Acidithiobacillus ferrooxidans (strain ATCC 23270 / DSM 14882 / CIP 104768 / NCIMB 8455) (Ferrobacillus ferrooxidans (strain ATCC 23270)), this protein is Serine hydroxymethyltransferase.